The chain runs to 904 residues: Phosphoenolpyruvate carboxylase (904 aa).

A disordered region spans residues 52–71 (ISRRESDAPPSTLSEQLTGR). Catalysis depends on residues His151 and Lys570.

Belongs to the PEPCase type 1 family. Requires Mg(2+) as cofactor.

The enzyme catalyses oxaloacetate + phosphate = phosphoenolpyruvate + hydrogencarbonate. Its function is as follows. Forms oxaloacetate, a four-carbon dicarboxylic acid source for the tricarboxylic acid cycle. The polypeptide is Phosphoenolpyruvate carboxylase (Xanthomonas oryzae pv. oryzae (strain MAFF 311018)).